Here is a 254-residue protein sequence, read N- to C-terminus: Alcohol dehydrogenase 2 (254 aa).

Position 10–33 (10–33 (FVAGLGGIGLDTSREIVKSGPKNL)) interacts with NAD(+). Serine 138 is a binding site for substrate. Catalysis depends on tyrosine 151, which acts as the Proton acceptor.

It belongs to the short-chain dehydrogenases/reductases (SDR) family. In terms of assembly, homodimer.

The catalysed reaction is a primary alcohol + NAD(+) = an aldehyde + NADH + H(+). The enzyme catalyses a secondary alcohol + NAD(+) = a ketone + NADH + H(+). This chain is Alcohol dehydrogenase 2 (Adh2), found in Drosophila hydei (Fruit fly).